The primary structure comprises 212 residues: External core antigen (212 aa).

Residues 1–19 (MQLFHLCLIISCSCPTVQA) form the signal peptide. The HBEAG stretch occupies residues 25–27 (GWL). The tract at residues 172-212 (LPETTVVRRRGRSPRRRTPSPRRRRSQSPRRRRSQSRESQC) is disordered. Basic residues predominate over residues 178–205 (VRRRGRSPRRRTPSPRRRRSQSPRRRRS). Residues 184 to 190 (SPRRRTP) form a 1; half-length repeat. Residues 184-206 (SPRRRTPSPRRRRSQSPRRRRSQ) form a 3 X 8 AA repeats of S-P-R-R-R-R-S-Q region. A propeptide spanning residues 184–212 (SPRRRTPSPRRRRSQSPRRRRSQSRESQC) is cleaved from the precursor. A run of 2 repeats spans residues 191-198 (SPRRRRSQ) and 199-206 (SPRRRRSQ).

Belongs to the orthohepadnavirus precore antigen family. As to quaternary structure, homodimerizes. In terms of processing, phosphorylated. Cleaved by host furin.

It localises to the secreted. The protein localises to the host nucleus. May regulate immune response to the intracellular capsid in acting as a T-cell tolerogen, by having an immunoregulatory effect which prevents destruction of infected cells by cytotoxic T-cells. This immune regulation may predispose to chronicity during perinatal infections and prevent severe liver injury during adult infections. The sequence is that of External core antigen from Hepatitis B virus genotype D (isolate Germany/1-91/1991) (HBV-D).